The primary structure comprises 350 residues: tRNA uridine(34) hydroxylase (350 aa).

One can recognise a Rhodanese domain in the interval 146-240 (DDPDALFIDM…YARKAREQGL (95 aa)). C200 serves as the catalytic Cysteine persulfide intermediate.

Belongs to the TrhO family.

It carries out the reaction uridine(34) in tRNA + AH2 + O2 = 5-hydroxyuridine(34) in tRNA + A + H2O. Functionally, catalyzes oxygen-dependent 5-hydroxyuridine (ho5U) modification at position 34 in tRNAs, the first step in 5-carboxymethoxyuridine (cmo5U) biosynthesis. May be part of an alternate pathway, which is able to bypass cmo5U biogenesis in a subset of tRNAs under aerobic conditions. This is tRNA uridine(34) hydroxylase from Escherichia coli (strain K12).